The following is a 34-amino-acid chain: Sarcoplasmic/endoplasmic reticulum calcium ATPase regulator DWORF (34 aa).

The helical transmembrane segment at 12–32 (IVPILLLVGWIVGCIIVIYIV) threads the bilayer.

In terms of assembly, homooligomer. Can also form heterooligomers with other sarcoplasmic/endoplasmic reticulum calcium ATPase (SERCA) regulators ARLN, ERLN, PLN and SLN. Monomer. Interacts with ATP2A1/SERCA1; the interaction results in activation of ATP2A1. Interacts as a monomer with ATP2A2/SERCA2; the interaction results in activation of ATP2A2. As to expression, highly expressed in heart (at protein level). Detected in heart and soleus, a postural muscle group of the hindlimb containing the highest enrichment of slow-twitch muscle fibers. Also expressed in diaphragm, which contains some slow-twitch fibers. Not detected in the quadriceps, a fast-twitch muscle group, or in cardiac atrial muscle. Not expressed in the prenatal heart but gradually increases in abundance postnatally.

The protein localises to the sarcoplasmic reticulum membrane. Functionally, enhances the activity of ATP2A1/SERCA1 ATPase in sarcoplasmic reticulum by displacing ATP2A1/SERCA1 inhibitors, thereby acting as a key regulator of skeletal muscle activity. Also enhances the activity of the ATP2A2/SERCA2 ATPase. Does not directly stimulate SERCA pump activity. Binds preferentially to the phosphorylated E1 and E2 conformational forms of ATP2A2 which predominate at high Ca(2+) concentrations during the systolic phase of the cardiac cycle. Competes with ATP2A2 inhibitor phospholamban (PLN) for binding to ATP2A2 and displaces PLN. Can activate ATP2A2 directly in the absence of PLN. Also enhances sarcoplasmic reticulum Ca(2+) uptake and myocyte contractility by displacing the SERCA inhibitory peptides sarcolipin (SLN) and myoregulin (MRLN). In Mus musculus (Mouse), this protein is Sarcoplasmic/endoplasmic reticulum calcium ATPase regulator DWORF.